Reading from the N-terminus, the 92-residue chain is Exodeoxyribonuclease 7 small subunit (92 aa).

Positions 71–84 (AESAGTAKSAVAAD) are enriched in low complexity. The segment at 71–92 (AESAGTAKSAVAADSRGAADSA) is disordered.

It belongs to the XseB family. As to quaternary structure, heterooligomer composed of large and small subunits.

It is found in the cytoplasm. The enzyme catalyses Exonucleolytic cleavage in either 5'- to 3'- or 3'- to 5'-direction to yield nucleoside 5'-phosphates.. Its function is as follows. Bidirectionally degrades single-stranded DNA into large acid-insoluble oligonucleotides, which are then degraded further into small acid-soluble oligonucleotides. This Leifsonia xyli subsp. xyli (strain CTCB07) protein is Exodeoxyribonuclease 7 small subunit.